Here is a 92-residue protein sequence, read N- to C-terminus: RNA-binding protein Hfq (92 aa).

In terms of domain architecture, Sm spans 9-68; sequence DPFLNALRRERVPVSVYLVNGIKLQGTIESFDQFVVLLRNTVSQMVYKHAISTVVPARNV.

Belongs to the Hfq family. Homohexamer.

In terms of biological role, RNA chaperone that binds small regulatory RNA (sRNAs) and mRNAs to facilitate mRNA translational regulation in response to envelope stress, environmental stress and changes in metabolite concentrations. Also binds with high specificity to tRNAs. The chain is RNA-binding protein Hfq from Xylella fastidiosa (strain M12).